A 334-amino-acid polypeptide reads, in one-letter code: Porphobilinogen deaminase (334 aa).

Cys255 bears the S-(dipyrrolylmethanemethyl)cysteine mark.

Belongs to the HMBS family. As to quaternary structure, monomer. Dipyrromethane serves as cofactor.

The catalysed reaction is 4 porphobilinogen + H2O = hydroxymethylbilane + 4 NH4(+). The protein operates within porphyrin-containing compound metabolism; protoporphyrin-IX biosynthesis; coproporphyrinogen-III from 5-aminolevulinate: step 2/4. Functionally, tetrapolymerization of the monopyrrole PBG into the hydroxymethylbilane pre-uroporphyrinogen in several discrete steps. The polypeptide is Porphobilinogen deaminase (Burkholderia orbicola (strain MC0-3)).